A 510-amino-acid polypeptide reads, in one-letter code: ATP synthase subunit alpha (510 aa).

169–176 contributes to the ATP binding site; that stretch reads GDRQTGKT.

It belongs to the ATPase alpha/beta chains family. In terms of assembly, F-type ATPases have 2 components, CF(1) - the catalytic core - and CF(0) - the membrane proton channel. CF(1) has five subunits: alpha(3), beta(3), gamma(1), delta(1), epsilon(1). CF(0) has three main subunits: a(1), b(2) and c(9-12). The alpha and beta chains form an alternating ring which encloses part of the gamma chain. CF(1) is attached to CF(0) by a central stalk formed by the gamma and epsilon chains, while a peripheral stalk is formed by the delta and b chains.

The protein resides in the cell inner membrane. The catalysed reaction is ATP + H2O + 4 H(+)(in) = ADP + phosphate + 5 H(+)(out). Functionally, produces ATP from ADP in the presence of a proton gradient across the membrane. The alpha chain is a regulatory subunit. This Rickettsia massiliae (strain Mtu5) protein is ATP synthase subunit alpha.